Here is a 231-residue protein sequence, read N- to C-terminus: Large ribosomal subunit protein uL1 (231 aa).

Belongs to the universal ribosomal protein uL1 family. As to quaternary structure, part of the 50S ribosomal subunit.

Binds directly to 23S rRNA. The L1 stalk is quite mobile in the ribosome, and is involved in E site tRNA release. Its function is as follows. Protein L1 is also a translational repressor protein, it controls the translation of the L11 operon by binding to its mRNA. The protein is Large ribosomal subunit protein uL1 of Kosmotoga olearia (strain ATCC BAA-1733 / DSM 21960 / TBF 19.5.1).